The sequence spans 122 residues: Ribosome-binding factor A (122 aa).

The protein belongs to the RbfA family. In terms of assembly, monomer. Binds 30S ribosomal subunits, but not 50S ribosomal subunits or 70S ribosomes.

The protein resides in the cytoplasm. Its function is as follows. One of several proteins that assist in the late maturation steps of the functional core of the 30S ribosomal subunit. Associates with free 30S ribosomal subunits (but not with 30S subunits that are part of 70S ribosomes or polysomes). Required for efficient processing of 16S rRNA. May interact with the 5'-terminal helix region of 16S rRNA. The polypeptide is Ribosome-binding factor A (Polaromonas sp. (strain JS666 / ATCC BAA-500)).